The chain runs to 75 residues: MVRYFRRRKFCRFTAEGIKKIDYKDIMILKNYITENGKIVPSRITGTKAKYQRQLSRAIKIARFLGFIPYTDQHK.

It belongs to the bacterial ribosomal protein bS18 family. As to quaternary structure, part of the 30S ribosomal subunit. Forms a tight heterodimer with protein bS6.

Its function is as follows. Binds as a heterodimer with protein bS6 to the central domain of the 16S rRNA, where it helps stabilize the platform of the 30S subunit. This Buchnera aphidicola subsp. Cinara cedri (strain Cc) protein is Small ribosomal subunit protein bS18.